We begin with the raw amino-acid sequence, 153 residues long: Ribonuclease H (153 aa).

One can recognise an RNase H type-1 domain in the interval 4 to 146; it reads NNEIVEIYTD…CDRLATEQIK (143 aa). Mg(2+)-binding residues include aspartate 13, glutamate 51, aspartate 73, and aspartate 138.

The protein belongs to the RNase H family. As to quaternary structure, monomer. It depends on Mg(2+) as a cofactor.

The protein resides in the cytoplasm. The catalysed reaction is Endonucleolytic cleavage to 5'-phosphomonoester.. In terms of biological role, endonuclease that specifically degrades the RNA of RNA-DNA hybrids. The chain is Ribonuclease H from Caldanaerobacter subterraneus subsp. tengcongensis (strain DSM 15242 / JCM 11007 / NBRC 100824 / MB4) (Thermoanaerobacter tengcongensis).